The chain runs to 82 residues: ATP synthase subunit c (82 aa).

Transmembrane regions (helical) follow at residues 7-27 (LVAL…CIGI) and 53-73 (FLLA…AMLF).

The protein belongs to the ATPase C chain family. In terms of assembly, F-type ATPases have 2 components, F(1) - the catalytic core - and F(0) - the membrane proton channel. F(1) has five subunits: alpha(3), beta(3), gamma(1), delta(1), epsilon(1). F(0) has three main subunits: a(1), b(2) and c(10-14). The alpha and beta chains form an alternating ring which encloses part of the gamma chain. F(1) is attached to F(0) by a central stalk formed by the gamma and epsilon chains, while a peripheral stalk is formed by the delta and b chains.

The protein localises to the cell inner membrane. F(1)F(0) ATP synthase produces ATP from ADP in the presence of a proton or sodium gradient. F-type ATPases consist of two structural domains, F(1) containing the extramembraneous catalytic core and F(0) containing the membrane proton channel, linked together by a central stalk and a peripheral stalk. During catalysis, ATP synthesis in the catalytic domain of F(1) is coupled via a rotary mechanism of the central stalk subunits to proton translocation. Its function is as follows. Key component of the F(0) channel; it plays a direct role in translocation across the membrane. A homomeric c-ring of between 10-14 subunits forms the central stalk rotor element with the F(1) delta and epsilon subunits. This Leptothrix cholodnii (strain ATCC 51168 / LMG 8142 / SP-6) (Leptothrix discophora (strain SP-6)) protein is ATP synthase subunit c.